A 930-amino-acid polypeptide reads, in one-letter code: MAAPYKSDRRGLIWICIFLGSLCDIRAEQIRYSVPEELERGSVVGNLAADLGLEPGKLAERGVRIVSRGKTQLFALNPRSGSLVTAGRVDREGLCDRSPKCTANLEILLEDKVRILAIEVEIIDVNDNAPSFGAQQREIKVAESENPGTRFPLPEAFDLDIGVNALQGYQLSSNDHFSLDVQSGPDGIKYPELVLENALDREEEAVHHLVLTAFDGGDPVRSGTATIQVTLVDTNDNAPVFTQPEYHISVKENLPVGTRLLTIKATDPDEGVNGEVTYSFRNVREKISQLFQLNSLTGDITVLGELDYEDSGFYDVDVEAHDGPGLRARSKVLVTVLDVNDNAPEVTVTSLTSSIQEASSPGTVIALFNVHDSDSGENGLVTCSIPDNLPFRLEKTYGNYHRLLIHRTLDREEVSDYNITITATDQGTPPLSTETYISLQVVDINDNPPTFTHASYSAYIPENNPRGASILSITAQDPDSGENAQVIYSLSEDTIQGAPMSSYVSINSNTGVLYALRSFDYEQFQDLKLLVTARDSGTPPLSSNVSLSLSVLDQNDNTPEILYPTIPTDGSTGVELTPRSADPGYLVTKVVAVDKDSGQNAWLSYRLLKASEPGLFSVGLHTGEVRTARALLDRDALKQSLVVTVQDHGQPPLSATVTLTIAVSDNIPDILADLVNINAPIDQEDSDITLYLVVAVAAVSCVFLAFVIVLLIHRLRRWHSTRLLQAAGNGLSSLPASHFVGVDGVHAFLQTYSHEVSLTADSGKSHLIFPQPNYADTLISQESCGKSDPLLVSQDLLEIKGDSSLQQAPPNTDWRFSQAQRPGTSGSQNGDETGTWPNNQFDTEMLQAMILASASEAADGSSTLGGGAGTMGLSARYGPQFTLQHVPDYRQNVYIPGSNATLTNAAGKRDGKAPAGGNGNKKKSGKKEKK.

A signal peptide spans 1-27 (MAAPYKSDRRGLIWICIFLGSLCDIRA). 6 consecutive Cadherin domains span residues 28 to 132 (EQIR…APSF), 133 to 241 (GAQQ…APVF), 242 to 346 (TQPE…APEV), 347 to 451 (TVTS…PPTF), 452 to 561 (THAS…TPEI), and 569 to 682 (DGST…APID). Residues 28–691 (EQIRYSVPEE…DQEDSDITLY (664 aa)) are Extracellular-facing. Asn418 and Asn544 each carry an N-linked (GlcNAc...) asparagine glycan. The helical transmembrane segment at 692-712 (LVVAVAAVSCVFLAFVIVLLI) threads the bilayer. Residues 713–930 (HRLRRWHSTR…KKKSGKKEKK (218 aa)) lie on the Cytoplasmic side of the membrane. Disordered stretches follow at residues 803–839 (SSLQQAPPNTDWRFSQAQRPGTSGSQNGDETGTWPNN) and 900–930 (ATLTNAAGKRDGKAPAGGNGNKKKSGKKEKK). Residues 920–930 (NKKKSGKKEKK) show a composition bias toward basic residues.

The protein localises to the cell membrane. Potential calcium-dependent cell-adhesion protein. May be involved in the establishment and maintenance of specific neuronal connections in the brain. This is Protocadherin gamma-A4 from Mus musculus (Mouse).